A 129-amino-acid polypeptide reads, in one-letter code: Small ribosomal subunit protein uS11 (129 aa).

Belongs to the universal ribosomal protein uS11 family. As to quaternary structure, part of the 30S ribosomal subunit. Interacts with proteins S7 and S18. Binds to IF-3.

Functionally, located on the platform of the 30S subunit, it bridges several disparate RNA helices of the 16S rRNA. Forms part of the Shine-Dalgarno cleft in the 70S ribosome. The sequence is that of Small ribosomal subunit protein uS11 from Colwellia psychrerythraea (strain 34H / ATCC BAA-681) (Vibrio psychroerythus).